The following is a 160-amino-acid chain: Ureidoglycolate lyase (160 aa).

It belongs to the ureidoglycolate lyase family. Homodimer. Requires Ni(2+) as cofactor.

It carries out the reaction (S)-ureidoglycolate = urea + glyoxylate. It participates in nitrogen metabolism; (S)-allantoin degradation. Catalyzes the catabolism of the allantoin degradation intermediate (S)-ureidoglycolate, generating urea and glyoxylate. Involved in the anaerobic utilization of allantoin as sole nitrogen source. Reinforces the induction of genes involved in the degradation of allantoin and glyoxylate by producing glyoxylate. The sequence is that of Ureidoglycolate lyase from Escherichia coli O139:H28 (strain E24377A / ETEC).